A 411-amino-acid chain; its full sequence is Anaerobic nitric oxide reductase flavorubredoxin homolog (411 aa).

A zinc metallo-hydrolase region spans residues 30–210 (LRGSSYNSYL…PFSRLVTPKI (181 aa)). Fe cation is bound by residues histidine 79, glutamate 81, aspartate 83, histidine 147, aspartate 166, histidine 227, cysteine 360, cysteine 363, cysteine 393, and cysteine 396. Residues 355 to 406 (GPRMQCSVCQWIYDPAKGEPMQDVAPGTPWSEVPDNFLCPECSLGKDVFDEL) form the Rubredoxin-like domain.

In the N-terminal section; belongs to the zinc metallo-hydrolase group 3 family. As to quaternary structure, homotetramer. The cofactor is Fe cation.

It is found in the cytoplasm. The protein operates within nitrogen metabolism; nitric oxide reduction. Its function is as follows. Anaerobic nitric oxide reductase; uses NADH to detoxify nitric oxide (NO), protecting several 4Fe-4S NO-sensitive enzymes. Has at least 2 reductase partners, only one of which (NorW, flavorubredoxin reductase) has been identified. NO probably binds to the di-iron center. Also able to function as an aerobic oxygen reductase. This Escherichia coli O157:H7 protein is Anaerobic nitric oxide reductase flavorubredoxin homolog.